We begin with the raw amino-acid sequence, 728 residues long: Catalase-peroxidase (728 aa).

Residues 91–218 constitute a cross-link (tryptophyl-tyrosyl-methioninium (Trp-Tyr) (with M-244)); sequence WHSAGTYRTA…LAAVQMGLIY (128 aa). H92 acts as the Proton acceptor in catalysis. Positions 218-244 form a cross-link, tryptophyl-tyrosyl-methioninium (Tyr-Met) (with W-91); it reads YVNPEGPDGNPDPVAAARDIRDTFARM. H259 serves as a coordination point for heme b.

This sequence belongs to the peroxidase family. Peroxidase/catalase subfamily. Homodimer or homotetramer. Requires heme b as cofactor. Formation of the three residue Trp-Tyr-Met cross-link is important for the catalase, but not the peroxidase activity of the enzyme.

The catalysed reaction is H2O2 + AH2 = A + 2 H2O. The enzyme catalyses 2 H2O2 = O2 + 2 H2O. In terms of biological role, bifunctional enzyme with both catalase and broad-spectrum peroxidase activity. In Burkholderia mallei (strain NCTC 10247), this protein is Catalase-peroxidase.